A 775-amino-acid chain; its full sequence is Subtilisin-like protease SBT4.1 (775 aa).

An N-terminal signal peptide occupies residues 1–23 (MAIAFHTFLLQLLLFFFASFAEA). A glycan (N-linked (GlcNAc...) asparagine) is linked at Asn24. The propeptide at 24 to 106 (NDSRKTYLVQ…VSRSRNLKLQ (83 aa)) is activation peptide. Positions 29 to 105 (TYLVQMKVGG…EVSRSRNLKL (77 aa)) constitute an Inhibitor I9 domain. In terms of domain architecture, Peptidase S8 spans 110–606 (SWDFMNLTLK…SGHLNATKVR (497 aa)). N-linked (GlcNAc...) asparagine glycans are attached at residues Asn115 and Asn126. Catalysis depends on Asp136, which acts as the Charge relay system. An N-linked (GlcNAc...) asparagine glycan is attached at Asn162. His196 (charge relay system) is an active-site residue. In terms of domain architecture, PA spans 365–459 (FYPLLNEKAP…FLDEQKKGKL (95 aa)). An N-linked (GlcNAc...) asparagine glycan is attached at Asn437. Ser551 (charge relay system) is an active-site residue. A glycan (N-linked (GlcNAc...) asparagine) is linked at Asn601.

It belongs to the peptidase S8 family. Post-translationally, the C-terminal propeptide is autocleaved.

Its subcellular location is the secreted. This Arabidopsis thaliana (Mouse-ear cress) protein is Subtilisin-like protease SBT4.1.